Consider the following 259-residue polypeptide: DNA-directed RNA polymerase 30 kDa polypeptide (259 aa).

A TFIIS-type zinc finger spans residues 155-195 (YNTPCPNCKSRNTTPMMIQTRAADEPPLVRHACRDCKQHFK). Residues Cys159, Cys162, Cys187, and Cys190 each coordinate Zn(2+). The disordered stretch occupies residues 220 to 259 (EILPDNNPSPPESPEPASPIDDGLIRVTFDRNDEPPEDDE). Residues 226-236 (NPSPPESPEPA) show a composition bias toward pro residues.

It belongs to the poxviridae DNA-directed RNA polymerase 30 kDa subunit family. As to quaternary structure, the DNA-dependent RNA polymerase (vRNAP) consists of eight subunits encoded by early viral genes and termed according to their apparent molecular masses Rpo147, Rpo132, Rpo35, Rpo30, Rpo22, Rpo19, Rpo18, and Rpo7. The same holoenzyme, with the addition of the transcription-specificity factor RAP94, is used for early gene expression.

It localises to the virion. Its subcellular location is the host cytoplasm. The enzyme catalyses RNA(n) + a ribonucleoside 5'-triphosphate = RNA(n+1) + diphosphate. Functionally, part of the DNA-dependent RNA polymerase which catalyzes the transcription of viral DNA into RNA using the four ribonucleoside triphosphates as substrates. Responsible for the transcription of early, intermediate and late genes. DNA-dependent RNA polymerase associates with the early transcription factor (ETF), itself composed of OPG118 and OPG134, thereby allowing the early genes transcription. Late transcription, and probably also intermediate transcription, require newly synthesized RNA polymerase. In Variola virus (isolate Human/India/Ind3/1967) (VARV), this protein is DNA-directed RNA polymerase 30 kDa polypeptide (OPG066).